A 217-amino-acid chain; its full sequence is MKFSFAALASAMLLTSTAAFAGIVTSSSNIDFLAIDGQKANKDLLKSTKSFNINESQTHQVVVRVSEIVRHGSDRSLYESDPIVVTFQGTNEDVVISAPKLENERDIKNFKDSPSVIVKTNSGKIIATKQEILKQEGFLPGANLIDTLSEYNASGSVASVSNFATAMPAVALGFAKAQKGKVVVQGENIAEQQLQFWFQQADKETQARFINWAKNQK.

A signal peptide spans 1-21; sequence MKFSFAALASAMLLTSTAAFA.

This sequence belongs to the UPF0319 family.

This chain is UPF0319 protein HSM_0266, found in Histophilus somni (strain 2336) (Haemophilus somnus).